The sequence spans 62 residues: Sperm protamine P1 (62 aa).

Residues 1–46 (MARCRRHSRSRSRSRNQCQRRRRRHYNRRRTYRRSRRHSRRRRVRR) are disordered.

The protein belongs to the protamine P1 family. As to expression, testis.

It localises to the nucleus. It is found in the chromosome. Its function is as follows. Protamines substitute for histones in the chromatin of sperm during the haploid phase of spermatogenesis. They compact sperm DNA into a highly condensed, stable and inactive complex. This Planigale gilesi (Flat-skulled marsupial mouse) protein is Sperm protamine P1 (PRM1).